Reading from the N-terminus, the 702-residue chain is Polyribonucleotide nucleotidyltransferase (702 aa).

2 residues coordinate Mg(2+): Asp493 and Asp499. The 61-residue stretch at 559–619 folds into the KH domain; it reads PKVEIFNVDP…NLISQSKEYI (61 aa). The S1 motif domain maps to 643-702; the sequence is GEEFLGRVQKVVEFGVFVELKEGVDGLLHNSKIKEKLEVGHEIKVKVAEIKNGKVSLDLA.

Belongs to the polyribonucleotide nucleotidyltransferase family. Requires Mg(2+) as cofactor.

The protein localises to the cytoplasm. The catalysed reaction is RNA(n+1) + phosphate = RNA(n) + a ribonucleoside 5'-diphosphate. Its function is as follows. Involved in mRNA degradation. Catalyzes the phosphorolysis of single-stranded polyribonucleotides processively in the 3'- to 5'-direction. In Campylobacter lari (strain RM2100 / D67 / ATCC BAA-1060), this protein is Polyribonucleotide nucleotidyltransferase.